The sequence spans 962 residues: Protease 3 (962 aa).

Positions methionine 1–alanine 23 are cleaved as a signal peptide. Residue histidine 88 participates in Zn(2+) binding. Glutamate 91 functions as the Proton acceptor in the catalytic mechanism. The Zn(2+) site is built by histidine 92 and glutamate 169.

This sequence belongs to the peptidase M16 family. Monomer. The cofactor is Zn(2+).

The protein localises to the periplasm. The catalysed reaction is Preferential cleavage of 16-Tyr-|-Leu-17 and 25-Phe-|-Tyr-26 bonds of oxidized insulin B chain. Also acts on other substrates of Mw less than 7 kDa such as insulin and glucagon.. Its function is as follows. Endopeptidase that degrades small peptides of less than 7 kDa, such as glucagon and insulin. This chain is Protease 3 (ptrA), found in Escherichia coli O6:H1 (strain CFT073 / ATCC 700928 / UPEC).